A 197-amino-acid polypeptide reads, in one-letter code: UPF0251 protein CT1277 (197 aa).

A disordered region spans residues Gly-138–Val-197. The segment covering Gly-157–Gly-171 has biased composition (basic and acidic residues). Gly residues predominate over residues Glu-172–Gln-184.

This sequence belongs to the UPF0251 family.

The chain is UPF0251 protein CT1277 from Chlorobaculum tepidum (strain ATCC 49652 / DSM 12025 / NBRC 103806 / TLS) (Chlorobium tepidum).